Reading from the N-terminus, the 179-residue chain is UPF0227 protein SO_2251 (179 aa).

It belongs to the UPF0227 family.

The protein is UPF0227 protein SO_2251 of Shewanella oneidensis (strain ATCC 700550 / JCM 31522 / CIP 106686 / LMG 19005 / NCIMB 14063 / MR-1).